Reading from the N-terminus, the 860-residue chain is Ras GTPase-activating-like protein gapA (860 aa).

A compositionally biased stretch (acidic residues) spans 1–20 (MEGLEIEDEDVILLDEDDDS). The interval 1 to 48 (MEGLEIEDEDVILLDEDDDSSSSSTVNNSSSNIKNNGNTNNNIGNDDS) is disordered. The segment covering 21 to 46 (SSSSTVNNSSSNIKNNGNTNNNIGND) has biased composition (low complexity). Residues 146-185 (AEIQELKRNMVAEIRRNHLLERDVNKLDKRIALLIKHRSN) are a coiled coil. Residues 269 to 515 (FLILSLFRLA…SIVRQYLEDL (247 aa)) enclose the Ras-GAP domain. Residues 663 to 732 (NNPQLSSNAE…TIALRDLRKH (70 aa)) are a coiled coil.

As to quaternary structure, heterotetramer. Quaternary complex with activated rac1A, ctxA and ctxB in the absence of rgaA.

Functionally, part of signaling pathway that is required for completion of cytokinesis. gapA and rgaA control cortexillin localization to the cleavage furrow and hence may be involved in cleavage of the midbody in the final stage of cytokinesis by regulating the actin cytoskeleton. Forms a complex by linking activated rac1A to ctxA in the absence of rgaA. Assembly of this complex is necessary for the recruitment of cortexillin to the midzone of the dividing cell. The protein is Ras GTPase-activating-like protein gapA (gapA) of Dictyostelium discoideum (Social amoeba).